The primary structure comprises 313 residues: MSQEFAHLSVLLEETVGGLNIKDDGIYIDGTFGRGGHSRQVLQRLGEKGRLIAIDRDPQAIEAAKQFADDPRFQIVHGGFGQLADYVEDLGLVGKIDGVLLDLGVSSPQLDDAERGFSFLRDGPLDMRMDNSQGETAAQWLARAEIEDMAWVFKTYGEEKNARHIARCIAADRDKTPFLRTKDLADLIARITKNKERNKHPATRVFQAIRIYINSELDQIDQALEGALTVLAPQGRLSIISFHSLEDRIVKRFIRRHSQGESVPHGLPITEDQINKSRKLRAIGKAIMPSDEEIERNARARSSVLRIAERLDY.

Residues 35 to 37 (GGH), aspartate 55, phenylalanine 80, aspartate 102, and glutamine 109 contribute to the S-adenosyl-L-methionine site.

It belongs to the methyltransferase superfamily. RsmH family.

It localises to the cytoplasm. The catalysed reaction is cytidine(1402) in 16S rRNA + S-adenosyl-L-methionine = N(4)-methylcytidine(1402) in 16S rRNA + S-adenosyl-L-homocysteine + H(+). Functionally, specifically methylates the N4 position of cytidine in position 1402 (C1402) of 16S rRNA. This chain is Ribosomal RNA small subunit methyltransferase H, found in Shewanella oneidensis (strain ATCC 700550 / JCM 31522 / CIP 106686 / LMG 19005 / NCIMB 14063 / MR-1).